The following is a 394-amino-acid chain: NAD(P)H-quinone oxidoreductase subunit H (394 aa).

It belongs to the complex I 49 kDa subunit family. In terms of assembly, NDH-1 can be composed of about 15 different subunits; different subcomplexes with different compositions have been identified which probably have different functions.

It localises to the cellular thylakoid membrane. It carries out the reaction a plastoquinone + NADH + (n+1) H(+)(in) = a plastoquinol + NAD(+) + n H(+)(out). The enzyme catalyses a plastoquinone + NADPH + (n+1) H(+)(in) = a plastoquinol + NADP(+) + n H(+)(out). In terms of biological role, NDH-1 shuttles electrons from an unknown electron donor, via FMN and iron-sulfur (Fe-S) centers, to quinones in the respiratory and/or the photosynthetic chain. The immediate electron acceptor for the enzyme in this species is believed to be plastoquinone. Couples the redox reaction to proton translocation, and thus conserves the redox energy in a proton gradient. Cyanobacterial NDH-1 also plays a role in inorganic carbon-concentration. The chain is NAD(P)H-quinone oxidoreductase subunit H from Synechococcus sp. (strain JA-3-3Ab) (Cyanobacteria bacterium Yellowstone A-Prime).